Reading from the N-terminus, the 146-residue chain is VHLSSEEKGLITSLWGKIDIEQTGGEALGRLLIVYPWTSRFFDHFGDLSSAKAVLGNAKVLAHGAKVLVSFGDAIKNLDNLKGTFAKLSELHCDKLHVDPENFKLLGNVLVICLAEHFGKDFTIDAQVAWQKLVAGVANALAHKYH.

N-acetylvaline is present on valine 1. A Globin domain is found at 2–146; that stretch reads HLSSEEKGLI…VANALAHKYH (145 aa). Phosphothreonine is present on threonine 12. N6-acetyllysine is present on lysine 59. Position 63 (histidine 63) interacts with heme b. N6-acetyllysine is present on lysine 82. Histidine 92 is a heme b binding site. The residue at position 93 (cysteine 93) is an S-nitrosocysteine. Lysine 144 is subject to N6-acetyllysine.

This sequence belongs to the globin family. In terms of assembly, heterotetramer of two alpha chains and two beta chains. In terms of tissue distribution, red blood cells.

Its function is as follows. Involved in oxygen transport from the lung to the various peripheral tissues. The protein is Hemoglobin subunit beta (HBB) of Potorous tridactylus (Potoroo).